We begin with the raw amino-acid sequence, 275 residues long: 4-hydroxy-3-methylbut-2-enyl diphosphate reductase (275 aa).

Cys12 serves as a coordination point for [4Fe-4S] cluster. Residues His36 and His70 each contribute to the (2E)-4-hydroxy-3-methylbut-2-enyl diphosphate site. Dimethylallyl diphosphate-binding residues include His36 and His70. Isopentenyl diphosphate contacts are provided by His36 and His70. [4Fe-4S] cluster is bound at residue Cys92. Position 120 (His120) interacts with (2E)-4-hydroxy-3-methylbut-2-enyl diphosphate. His120 contributes to the dimethylallyl diphosphate binding site. Position 120 (His120) interacts with isopentenyl diphosphate. Glu122 functions as the Proton donor in the catalytic mechanism. Position 158 (Thr158) interacts with (2E)-4-hydroxy-3-methylbut-2-enyl diphosphate. Cys186 is a [4Fe-4S] cluster binding site. (2E)-4-hydroxy-3-methylbut-2-enyl diphosphate is bound by residues Ser214, Ser215, Asn216, and Ser258. Dimethylallyl diphosphate is bound by residues Ser214, Ser215, Asn216, and Ser258. 4 residues coordinate isopentenyl diphosphate: Ser214, Ser215, Asn216, and Ser258.

Belongs to the IspH family. The cofactor is [4Fe-4S] cluster.

The enzyme catalyses isopentenyl diphosphate + 2 oxidized [2Fe-2S]-[ferredoxin] + H2O = (2E)-4-hydroxy-3-methylbut-2-enyl diphosphate + 2 reduced [2Fe-2S]-[ferredoxin] + 2 H(+). It catalyses the reaction dimethylallyl diphosphate + 2 oxidized [2Fe-2S]-[ferredoxin] + H2O = (2E)-4-hydroxy-3-methylbut-2-enyl diphosphate + 2 reduced [2Fe-2S]-[ferredoxin] + 2 H(+). Its pathway is isoprenoid biosynthesis; dimethylallyl diphosphate biosynthesis; dimethylallyl diphosphate from (2E)-4-hydroxy-3-methylbutenyl diphosphate: step 1/1. It participates in isoprenoid biosynthesis; isopentenyl diphosphate biosynthesis via DXP pathway; isopentenyl diphosphate from 1-deoxy-D-xylulose 5-phosphate: step 6/6. Functionally, catalyzes the conversion of 1-hydroxy-2-methyl-2-(E)-butenyl 4-diphosphate (HMBPP) into a mixture of isopentenyl diphosphate (IPP) and dimethylallyl diphosphate (DMAPP). Acts in the terminal step of the DOXP/MEP pathway for isoprenoid precursor biosynthesis. The sequence is that of 4-hydroxy-3-methylbut-2-enyl diphosphate reductase from Campylobacter hominis (strain ATCC BAA-381 / DSM 21671 / CCUG 45161 / LMG 19568 / NCTC 13146 / CH001A).